We begin with the raw amino-acid sequence, 282 residues long: MKLTIISGRSGSGKTTALQALEDQGFYCVDNLPVGMLPTLAKQLSEGDPPIERVAVGIDARNLPAQLLAFDNILHALNEQQVRSEIIYLDADDHTLLTRFSATRRRHPLGTDQRSLADAIGHERELLANIRQRADLVIDSSNHDVHTLRNLMRERVARREATLSLQLESFGFKNGLPTDADLVFDVRVLPNPHWHADLRPFTGKDDCIIEFLSQHQASHDMLKDIGDFVVRWLPAFANSDRSYVTVAIGCTGGRHRSVFITEQLAKNLRAEGIVLQVRHREL.

Position 8 to 15 (8 to 15) interacts with ATP; that stretch reads GRSGSGKT. Residue 59–62 coordinates GTP; that stretch reads DARN.

The protein belongs to the RapZ-like family.

In terms of biological role, displays ATPase and GTPase activities. This chain is Nucleotide-binding protein ABO_0549, found in Alcanivorax borkumensis (strain ATCC 700651 / DSM 11573 / NCIMB 13689 / SK2).